Reading from the N-terminus, the 472-residue chain is Argininosuccinate lyase (472 aa).

The protein belongs to the lyase 1 family. Argininosuccinate lyase subfamily.

It is found in the cytoplasm. It carries out the reaction 2-(N(omega)-L-arginino)succinate = fumarate + L-arginine. The protein operates within amino-acid biosynthesis; L-arginine biosynthesis; L-arginine from L-ornithine and carbamoyl phosphate: step 3/3. The sequence is that of Argininosuccinate lyase from Synechococcus sp. (strain CC9902).